Reading from the N-terminus, the 236-residue chain is Leucyl/phenylalanyl-tRNA--protein transferase (236 aa).

The protein belongs to the L/F-transferase family.

It localises to the cytoplasm. It catalyses the reaction N-terminal L-lysyl-[protein] + L-leucyl-tRNA(Leu) = N-terminal L-leucyl-L-lysyl-[protein] + tRNA(Leu) + H(+). The enzyme catalyses N-terminal L-arginyl-[protein] + L-leucyl-tRNA(Leu) = N-terminal L-leucyl-L-arginyl-[protein] + tRNA(Leu) + H(+). It carries out the reaction L-phenylalanyl-tRNA(Phe) + an N-terminal L-alpha-aminoacyl-[protein] = an N-terminal L-phenylalanyl-L-alpha-aminoacyl-[protein] + tRNA(Phe). Its function is as follows. Functions in the N-end rule pathway of protein degradation where it conjugates Leu, Phe and, less efficiently, Met from aminoacyl-tRNAs to the N-termini of proteins containing an N-terminal arginine or lysine. In Vibrio parahaemolyticus serotype O3:K6 (strain RIMD 2210633), this protein is Leucyl/phenylalanyl-tRNA--protein transferase.